The following is a 679-amino-acid chain: UvrABC system protein B (679 aa).

A Helicase ATP-binding domain is found at 25-412 (QGVNSGEEFQ…EGKFIEQVIR (388 aa)). 38-45 (GATGTGKT) contributes to the ATP binding site. A Beta-hairpin motif is present at residues 91 to 114 (YYDYYQPEAYVPVSDTYIAKTASI). The Helicase C-terminal domain occupies 429-583 (QIDDLLSEIR…KKYNQINGIT (155 aa)). A UVR domain is found at 639–674 (PSLIDKLENKMKDAAKELNFEEAANLRDRIKKLRQK).

This sequence belongs to the UvrB family. In terms of assembly, forms a heterotetramer with UvrA during the search for lesions. Interacts with UvrC in an incision complex.

Its subcellular location is the cytoplasm. Functionally, the UvrABC repair system catalyzes the recognition and processing of DNA lesions. A damage recognition complex composed of 2 UvrA and 2 UvrB subunits scans DNA for abnormalities. Upon binding of the UvrA(2)B(2) complex to a putative damaged site, the DNA wraps around one UvrB monomer. DNA wrap is dependent on ATP binding by UvrB and probably causes local melting of the DNA helix, facilitating insertion of UvrB beta-hairpin between the DNA strands. Then UvrB probes one DNA strand for the presence of a lesion. If a lesion is found the UvrA subunits dissociate and the UvrB-DNA preincision complex is formed. This complex is subsequently bound by UvrC and the second UvrB is released. If no lesion is found, the DNA wraps around the other UvrB subunit that will check the other stand for damage. The polypeptide is UvrABC system protein B (Prochlorococcus marinus subsp. pastoris (strain CCMP1986 / NIES-2087 / MED4)).